The primary structure comprises 27 residues: uncharacterized protein (27 aa).

The chain crosses the membrane as a helical span at residues 6–26 (IIVLGALIALLELIRFLLQLL).

It belongs to the DinQ family.

It localises to the cell inner membrane. This is an uncharacterized protein from Escherichia coli (strain K12).